Consider the following 254-residue polypeptide: 5-oxoprolinase subunit A (254 aa).

The protein belongs to the LamB/PxpA family. Forms a complex composed of PxpA, PxpB and PxpC.

The catalysed reaction is 5-oxo-L-proline + ATP + 2 H2O = L-glutamate + ADP + phosphate + H(+). In terms of biological role, catalyzes the cleavage of 5-oxoproline to form L-glutamate coupled to the hydrolysis of ATP to ADP and inorganic phosphate. In Burkholderia lata (strain ATCC 17760 / DSM 23089 / LMG 22485 / NCIMB 9086 / R18194 / 383), this protein is 5-oxoprolinase subunit A.